The following is a 413-amino-acid chain: Acetate kinase (413 aa).

N7 is a binding site for Mg(2+). K14 serves as a coordination point for ATP. Substrate is bound at residue R98. The active-site Proton donor/acceptor is the D157. ATP-binding positions include 216–220, 291–293, and 339–343; these read HIGNG, DLR, and GVGEN. E392 lines the Mg(2+) pocket.

The protein belongs to the acetokinase family. In terms of assembly, homodimer. Mg(2+) is required as a cofactor. Mn(2+) serves as cofactor.

It localises to the cytoplasm. The enzyme catalyses acetate + ATP = acetyl phosphate + ADP. The protein operates within metabolic intermediate biosynthesis; acetyl-CoA biosynthesis; acetyl-CoA from acetate: step 1/2. In terms of biological role, catalyzes the formation of acetyl phosphate from acetate and ATP. Can also catalyze the reverse reaction. The chain is Acetate kinase from Synechocystis sp. (strain ATCC 27184 / PCC 6803 / Kazusa).